The primary structure comprises 195 residues: Probable GTP-binding protein EngB (195 aa).

The EngB-type G domain occupies 22 to 195 (GLPEIALAGR…WGAIKKMISR (174 aa)). GTP is bound by residues 30-37 (GRSNVGKS), 57-61 (GKTQT), 75-78 (DVPG), 142-145 (TKAD), and 174-176 (FSS). Mg(2+) contacts are provided by serine 37 and threonine 59.

Belongs to the TRAFAC class TrmE-Era-EngA-EngB-Septin-like GTPase superfamily. EngB GTPase family. Mg(2+) serves as cofactor.

Necessary for normal cell division and for the maintenance of normal septation. This chain is Probable GTP-binding protein EngB, found in Bacillus velezensis (strain DSM 23117 / BGSC 10A6 / LMG 26770 / FZB42) (Bacillus amyloliquefaciens subsp. plantarum).